The following is a 285-amino-acid chain: (2Z,6Z)-farnesyl diphosphate synthase CPT6, chloroplastic (285 aa).

A chloroplast-targeting transit peptide spans 1–30; it reads MNSLFVGRPIVKSSYNVYTLPSSICGGHFF. The active site involves Asp-65.

It belongs to the UPP synthase family. Mg(2+) serves as cofactor. In terms of tissue distribution, expressed in roots and red fruits.

Its subcellular location is the plastid. The protein resides in the chloroplast. The enzyme catalyses 2 isopentenyl diphosphate + dimethylallyl diphosphate = (2Z,6Z)-farnesyl diphosphate + 2 diphosphate. It catalyses the reaction isopentenyl diphosphate + dimethylallyl diphosphate = neryl diphosphate + diphosphate. It carries out the reaction neryl diphosphate + isopentenyl diphosphate = (2Z,6Z)-farnesyl diphosphate + diphosphate. Functionally, uses neryl diphosphate to catalyze the cis-prenyl chain elongation and produce the 15 carbon product (2Z,6Z)-farnesyl diphosphate. This chain is (2Z,6Z)-farnesyl diphosphate synthase CPT6, chloroplastic, found in Solanum lycopersicum (Tomato).